Consider the following 380-residue polypeptide: Protein GOLM2 (380 aa).

At methionine 1 the chain carries N-acetylmethionine. The Cytoplasmic portion of the chain corresponds to 1–14; it reads MVGFGANRRAGRLP. Residues 15–35 form a helical; Signal-anchor for type II membrane protein membrane-spanning segment; that stretch reads SLVLAVLLVVIAVLAFNYWSI. Residues 35–195 are a coiled coil; the sequence is ISSRHVLLQE…QFLQEQKQEA (161 aa). The Lumenal portion of the chain corresponds to 36 to 380; sequence SSRHVLLQEE…YGKQRFNDAL (345 aa). 2 stretches are compositionally biased toward basic and acidic residues: residues 192 to 212 and 227 to 247; these read KQEA…DNHA and KNEE…KRGG. The segment at 192 to 254 is disordered; that stretch reads KQEAHKFESK…RGGDAGMPGI (63 aa). 2 positions are modified to phosphoserine: serine 233 and serine 275. Residues 280–380 form a disordered region; sequence ESHQVISHLP…YGKQRFNDAL (101 aa). Residues 305-321 show a composition bias toward polar residues; sequence NHNGNSRTSKQNPSNPL. Basic and acidic residues predominate over residues 344–380; the sequence is ATKDRAGDFHKLKQNDEERELQMDPADYGKQRFNDAL.

Belongs to the GOLM family.

Its subcellular location is the membrane. The polypeptide is Protein GOLM2 (GOLM2) (Bos taurus (Bovine)).